A 154-amino-acid chain; its full sequence is Probable biofilm-surface layer protein B (154 aa).

An N-terminal signal peptide occupies residues 1-30 (MLKRTSFVSSLFISSAVLLSILLPSGQAHA).

It belongs to the BslA/BslB family. Monomer in vitro.

The protein resides in the secreted. Its function is as follows. Has a minor role in biofilm architecture. May contribute to the surface hydrophobicity. The sequence is that of Probable biofilm-surface layer protein B from Bacillus subtilis (strain 168).